We begin with the raw amino-acid sequence, 622 residues long: Chaperone protein HscA homolog (622 aa).

The protein belongs to the heat shock protein 70 family.

Chaperone involved in the maturation of iron-sulfur cluster-containing proteins. Has a low intrinsic ATPase activity which is markedly stimulated by HscB. This is Chaperone protein HscA homolog from Methylobacillus flagellatus (strain ATCC 51484 / DSM 6875 / VKM B-1610 / KT).